A 356-amino-acid chain; its full sequence is 3-deoxy-alpha-D-manno-octulosonate 8-oxidase (356 aa).

It belongs to the iron-containing alcohol dehydrogenase family. It depends on a divalent metal cation as a cofactor.

It catalyses the reaction 3-deoxy-alpha-D-manno-oct-2-ulosonate + O2 = 3,8-dideoxy-8-oxo-alpha-D-manno-octulosonate + H2O2. Its pathway is bacterial outer membrane biogenesis; lipopolysaccharide biosynthesis. Its activity is regulated as follows. Inhibited by EDTA. Functionally, catalyzes the first step of the biosynthesis of Kdo8N (8-amino-3,8-dideoxy-D-manno-octulosonate) from Kdo (3-deoxy-D-manno-octulosonate). In Shewanella oneidensis (strain ATCC 700550 / JCM 31522 / CIP 106686 / LMG 19005 / NCIMB 14063 / MR-1), this protein is 3-deoxy-alpha-D-manno-octulosonate 8-oxidase.